A 218-amino-acid chain; its full sequence is Large ribosomal subunit protein uL3 (218 aa).

It belongs to the universal ribosomal protein uL3 family. As to quaternary structure, part of the 50S ribosomal subunit. Forms a cluster with proteins L14 and L19.

Functionally, one of the primary rRNA binding proteins, it binds directly near the 3'-end of the 23S rRNA, where it nucleates assembly of the 50S subunit. The sequence is that of Large ribosomal subunit protein uL3 from Rhodococcus jostii (strain RHA1).